The sequence spans 567 residues: Cytochrome P450 monooxygenase 79 (567 aa).

A helical transmembrane segment spans residues 7–24; that stretch reads ELAILAIVLLVTAVVFYT. N-linked (GlcNAc...) asparagine glycosylation is found at Asn223 and Asn279. Heme is bound at residue Cys475.

It belongs to the cytochrome P450 family. It depends on heme as a cofactor.

It is found in the membrane. Its pathway is secondary metabolite biosynthesis. Its function is as follows. Cytochrome P450 monooxygenase that is able to use dehydroabietic acid as a substrate for oxidation. The sequence is that of Cytochrome P450 monooxygenase 79 from Postia placenta (strain ATCC 44394 / Madison 698-R) (Brown rot fungus).